The primary structure comprises 74 residues: DNA-directed RNA polymerase subunit omega (74 aa).

This sequence belongs to the RNA polymerase subunit omega family. As to quaternary structure, the RNAP catalytic core consists of 2 alpha, 1 beta, 1 beta' and 1 omega subunit. When a sigma factor is associated with the core the holoenzyme is formed, which can initiate transcription.

It carries out the reaction RNA(n) + a ribonucleoside 5'-triphosphate = RNA(n+1) + diphosphate. Promotes RNA polymerase assembly. Latches the N- and C-terminal regions of the beta' subunit thereby facilitating its interaction with the beta and alpha subunits. The protein is DNA-directed RNA polymerase subunit omega of Helicobacter acinonychis (strain Sheeba).